A 565-amino-acid chain; its full sequence is Periplasmic trehalase (565 aa).

The N-terminal stretch at 1 to 30 (MKSPAPSRPQKMALIPACIFLCFAALSVQA) is a signal peptide. Substrate-binding positions include Arg-152, 159–160 (WD), Asn-196, 205–207 (RSQ), 277–279 (RPE), and Gly-310. Active-site proton donor/acceptor residues include Asp-312 and Glu-496. Glu-511 is a binding site for substrate. The segment at 538–565 (PCDNVPATRPTVKSATTQPSTKEAQPTP) is disordered. Positions 548–565 (TVKSATTQPSTKEAQPTP) are enriched in polar residues.

The protein belongs to the glycosyl hydrolase 37 family. Monomer.

It localises to the periplasm. It catalyses the reaction alpha,alpha-trehalose + H2O = alpha-D-glucose + beta-D-glucose. In terms of biological role, provides the cells with the ability to utilize trehalose at high osmolarity by splitting it into glucose molecules that can subsequently be taken up by the phosphotransferase-mediated uptake system. In Escherichia coli (strain 55989 / EAEC), this protein is Periplasmic trehalase.